The chain runs to 202 residues: GMP synthase [glutamine-hydrolyzing] subunit A (202 aa).

In terms of domain architecture, Glutamine amidotransferase type-1 spans 4–194; the sequence is KIYVVDNGGQ…IAICQQHKEK (191 aa). Cys81 serves as the catalytic Nucleophile. Catalysis depends on residues His168 and Glu170.

In terms of assembly, heterodimer composed of a glutamine amidotransferase subunit (A) and a GMP-binding subunit (B).

The enzyme catalyses XMP + L-glutamine + ATP + H2O = GMP + L-glutamate + AMP + diphosphate + 2 H(+). Its pathway is purine metabolism; GMP biosynthesis; GMP from XMP (L-Gln route): step 1/1. Its function is as follows. Catalyzes the synthesis of GMP from XMP. In Thermoplasma volcanium (strain ATCC 51530 / DSM 4299 / JCM 9571 / NBRC 15438 / GSS1), this protein is GMP synthase [glutamine-hydrolyzing] subunit A.